Here is a 1392-residue protein sequence, read N- to C-terminus: DNA-directed RNA polymerase subunit beta (1392 aa).

A disordered region spans residues 1372–1392 (LSSYAEEDPDEGPEALPEAAE).

This sequence belongs to the RNA polymerase beta chain family. In terms of assembly, the RNAP catalytic core consists of 2 alpha, 1 beta, 1 beta' and 1 omega subunit. When a sigma factor is associated with the core the holoenzyme is formed, which can initiate transcription.

It carries out the reaction RNA(n) + a ribonucleoside 5'-triphosphate = RNA(n+1) + diphosphate. Its function is as follows. DNA-dependent RNA polymerase catalyzes the transcription of DNA into RNA using the four ribonucleoside triphosphates as substrates. This is DNA-directed RNA polymerase subunit beta from Sphingopyxis alaskensis (strain DSM 13593 / LMG 18877 / RB2256) (Sphingomonas alaskensis).